The sequence spans 273 residues: NADPH-dependent 7-cyano-7-deazaguanine reductase (273 aa).

A substrate-binding site is contributed by 80–82 (IES). 82–83 (SK) provides a ligand contact to NADPH. Cys-180 (thioimide intermediate) is an active-site residue. Asp-187 acts as the Proton donor in catalysis. Substrate is bound at residue 219–220 (HE). 248–249 (RG) provides a ligand contact to NADPH.

This sequence belongs to the GTP cyclohydrolase I family. QueF type 2 subfamily. As to quaternary structure, homodimer.

Its subcellular location is the cytoplasm. It catalyses the reaction 7-aminomethyl-7-carbaguanine + 2 NADP(+) = 7-cyano-7-deazaguanine + 2 NADPH + 3 H(+). It participates in tRNA modification; tRNA-queuosine biosynthesis. Catalyzes the NADPH-dependent reduction of 7-cyano-7-deazaguanine (preQ0) to 7-aminomethyl-7-deazaguanine (preQ1). The sequence is that of NADPH-dependent 7-cyano-7-deazaguanine reductase from Bordetella avium (strain 197N).